The primary structure comprises 311 residues: Probable deoxyhypusine synthase (311 aa).

The active-site Nucleophile is Lys284.

This sequence belongs to the deoxyhypusine synthase family. It depends on NAD(+) as a cofactor.

It catalyses the reaction [eIF5A protein]-L-lysine + spermidine = [eIF5A protein]-deoxyhypusine + propane-1,3-diamine. The protein operates within protein modification; eIF5A hypusination. Its function is as follows. Catalyzes the NAD-dependent oxidative cleavage of spermidine and the subsequent transfer of the butylamine moiety of spermidine to the epsilon-amino group of a specific lysine residue of the eIF-5A precursor protein to form the intermediate deoxyhypusine residue. The protein is Probable deoxyhypusine synthase of Sulfolobus acidocaldarius (strain ATCC 33909 / DSM 639 / JCM 8929 / NBRC 15157 / NCIMB 11770).